The sequence spans 120 residues: Large ribosomal subunit protein eL18 (120 aa).

The protein belongs to the eukaryotic ribosomal protein eL18 family.

This chain is Large ribosomal subunit protein eL18, found in Thermococcus onnurineus (strain NA1).